The following is a 360-amino-acid chain: DNA replication and repair protein RecF (360 aa).

Residue 33-40 coordinates ATP; it reads GENGSGKT.

It belongs to the RecF family.

The protein resides in the cytoplasm. Its function is as follows. The RecF protein is involved in DNA metabolism; it is required for DNA replication and normal SOS inducibility. RecF binds preferentially to single-stranded, linear DNA. It also seems to bind ATP. In Rickettsia bellii (strain OSU 85-389), this protein is DNA replication and repair protein RecF.